Here is a 1245-residue protein sequence, read N- to C-terminus: ABC transporter B family member 13 (1245 aa).

A compositionally biased stretch (polar residues) spans 1 to 14 (MDNTERSSNGNIQA). Residues 1-20 (MDNTERSSNGNIQAETEAKE) are disordered. Residues 47 to 336 (MLLGGLGACI…AAPSLSAIAK (290 aa)) form the ABC transmembrane type-1 1 domain. Residues 48–68 (LLGGLGACIHGATLPLFFVFF) traverse the membrane as a helical segment. N-linked (GlcNAc...) asparagine glycosylation occurs at Asn77. The next 5 membrane-spanning stretches (helical) occupy residues 94 to 114 (LYLV…VSCW), 171 to 191 (HVLR…LSVW), 195 to 215 (LLTL…AIVM), 276 to 296 (LGVG…LWYA), and 314 to 334 (ILNV…LSAI). Residues Asn351 and Asn391 are each glycosylated (N-linked (GlcNAc...) asparagine). The 236-residue stretch at 372–607 (IEFQKVSFAY…GGDYATLVNC (236 aa)) folds into the ABC transporter 1 domain. 406–413 (GPSGSGKS) serves as a coordination point for ATP. Positions 610–629 (TEPQENSRSIMSETCKSQAG) are enriched in polar residues. Residues 610-660 (TEPQENSRSIMSETCKSQAGSSSSRRVSSSRRTSSFRVDQEKTKNDDSKKD) are disordered. Positions 630-646 (SSSSRRVSSSRRTSSFR) are enriched in low complexity. Residues 647 to 660 (VDQEKTKNDDSKKD) are compositionally biased toward basic and acidic residues. Residues 681-969 (ALLGSIGAVL…TLALTPDIVK (289 aa)) form the ABC transmembrane type-1 2 domain. 2 helical membrane-spanning segments follow: residues 686 to 706 (IGAV…AYVL) and 725 to 745 (AIIF…QHYF). Residue Asn778 is glycosylated (N-linked (GlcNAc...) asparagine). 4 helical membrane passes run 805 to 822 (IVQN…AFFY), 828 to 848 (AVVT…QLFL), 913 to 933 (LSQF…SVLI), and 947 to 967 (FMVL…TPDI). Positions 1004 to 1240 (IEFRNVSFVY…PNGFYKQLTS (237 aa)) constitute an ABC transporter 2 domain. N-linked (GlcNAc...) asparagine glycosylation is present at Asn1008. Residue 1039–1046 (GPSGSGKS) participates in ATP binding. N-linked (GlcNAc...) asparagine glycosylation is present at Asn1106.

This sequence belongs to the ABC transporter superfamily. ABCB family. Multidrug resistance exporter (TC 3.A.1.201) subfamily.

Its subcellular location is the membrane. The protein is ABC transporter B family member 13 (ABCB13) of Arabidopsis thaliana (Mouse-ear cress).